A 232-amino-acid polypeptide reads, in one-letter code: MIDLTQEKQEILIKNKFLAKVFGLMSIGLLISAVFAYATSENQTIKAIIFSNSMSFMAMILIQFGLVYAISGALNKISSNTATALFLLYSALTGVTLSSIFMIYTQGSIVFTFGITAGTFLGMSVYGYTTTTDLTKMGSYLIMGLWGIIIASLVNMFFRSSGLNFLISILGVVIFTGLTAYDVQNISKMDKMLQDDTEIKNRMAVVASLKLYLDFINLFLYLLRFLGQRRND.

The next 7 membrane-spanning stretches (helical) occupy residues 17-37 (FLAKVFGLMSIGLLISAVFAY), 54-74 (MSFMAMILIQFGLVYAISGAL), 84-104 (ALFLLYSALTGVTLSSIFMIY), 107-127 (GSIVFTFGITAGTFLGMSVYG), 138-158 (GSYLIMGLWGIIIASLVNMFF), 161-181 (SGLNFLISILGVVIFTGLTAY), and 203-223 (MAVVASLKLYLDFINLFLYLL).

This sequence belongs to the BI1 family.

The protein localises to the cell membrane. This is an uncharacterized protein from Borreliella burgdorferi (strain ATCC 35210 / DSM 4680 / CIP 102532 / B31) (Borrelia burgdorferi).